Reading from the N-terminus, the 164-residue chain is Thiol peroxidase (164 aa).

A Thioredoxin domain is found at 18 to 163 (INEGDFAPDF…FDAALAAYKN (146 aa)). Residue C60 is the Cysteine sulfenic acid (-SOH) intermediate of the active site. Cysteines 60 and 93 form a disulfide.

This sequence belongs to the peroxiredoxin family. Tpx subfamily. As to quaternary structure, homodimer.

The enzyme catalyses a hydroperoxide + [thioredoxin]-dithiol = an alcohol + [thioredoxin]-disulfide + H2O. In terms of biological role, thiol-specific peroxidase that catalyzes the reduction of hydrogen peroxide and organic hydroperoxides to water and alcohols, respectively. Plays a role in cell protection against oxidative stress by detoxifying peroxides. The protein is Thiol peroxidase of Staphylococcus aureus (strain COL).